The sequence spans 367 residues: Dual specificity protein phosphatase 1 (367 aa).

The region spanning 20–137 (GAAQCLLLDC…FSASCPELCS (118 aa)) is the Rhodanese domain. The region spanning 173–314 (GPVEILSFLY…LLQFESQVLA (142 aa)) is the Tyrosine-protein phosphatase domain. Catalysis depends on C258, which acts as the Phosphocysteine intermediate. 2 positions are modified to phosphoserine; by MAPK1 and MAPK3: S359 and S364.

It belongs to the protein-tyrosine phosphatase family. Non-receptor class dual specificity subfamily. Post-translationally, phosphorylation at Ser-359 and Ser-364 by MAPK1/ERK2 and MAPK3/ERK1 reduces its rate of degradation. 'Lys-48'-linked polyubiquitinated by NEURL3, leading to proteasomal degradation.

It localises to the nucleus. It catalyses the reaction O-phospho-L-tyrosyl-[protein] + H2O = L-tyrosyl-[protein] + phosphate. The enzyme catalyses O-phospho-L-seryl-[protein] + H2O = L-seryl-[protein] + phosphate. The catalysed reaction is O-phospho-L-threonyl-[protein] + H2O = L-threonyl-[protein] + phosphate. In terms of biological role, dual specificity phosphatase that dephosphorylates MAP kinase MAPK1/ERK2 on both 'Thr-183' and 'Tyr-185', regulating its activity during the meiotic cell cycle. This Mus musculus (Mouse) protein is Dual specificity protein phosphatase 1.